Consider the following 506-residue polypeptide: CDK5 regulatory subunit-associated protein 3 (506 aa).

3 consecutive short sequence motifs (shuffled ATG8-binding motif) follow at residues 267–270 (IDWG), 292–295 (IDWG), and 310–313 (IDWG). Residues 269–506 (WGDFGVEAVS…RPVNLMGTSL (238 aa)) form a required for interaction with UFL1 and mediates interaction with CHEK1 region. The tract at residues 355–370 (DELMELEIFLAQRAVE) is RPL10a-binding domain (RBD). Lys-450 participates in a covalent cross-link: Glycyl lysine isopeptide (Lys-Gly) (interchain with G-Cter in SUMO2).

Belongs to the CDK5RAP3 family. Substrate adapter component of the UFM1 ribosome E3 ligase (UREL) complex, composed of UFL1, DDRGK1 and CDK5RAP3. Interaction with UFL1 anchors CDK5RAP3 in the cytoplasm, preventing its translocation to the nucleus which allows expression of the CCND1 cyclin and progression of cells through the G1/S transition. Interacts with ATG8 family proteins MAP1LC3A, MAP1LC3B, GABARAP, GABARAPL1 and GABARAPL2. Interacts with CDK5R1; competes with CDK5RAP1 and CDK5RAP2. Interacts with RELA. Interacts with CHEK1; may negatively regulate CHEK1 and thereby stimulate entry into mitosis. Interacts with CDKN2A/ARF and MDM2; forms a ternary complex involved in regulation of p53/TP53. Interacts with MAPK14. Interacts with CCNB1. Interacts with TUBG1; may regulate CDK5RAP3 in mitotic G2/M transition checkpoint. As to quaternary structure, (Microbial infection) Interacts with hepatitis B virus large envelope protein mutant pre-s2; promotes mitotic entry. In terms of processing, may be phosphorylated by CDK5. Ubiquitinated. Probably triggers proteasomal degradation and is negatively regulated by UFL1. Post-translationally, may be ufmylated. In terms of processing, cleaved by caspases early during apoptosis, the resulting peptides may play a role in rupture of the nuclear envelope. In terms of tissue distribution, ubiquitously expressed. Expressed in heart, brain, placenta, lung, liver, skeletal muscle, kidney and pancreas. Isoform 3 is expressed in kidney, liver, skeletal muscle and placenta.

Its subcellular location is the endoplasmic reticulum membrane. It is found in the cytoplasm. The protein localises to the nucleus. The protein resides in the cytoskeleton. It localises to the microtubule organizing center. Its subcellular location is the centrosome. In terms of biological role, substrate adapter of E3 ligase complexes mediating ufmylation, the covalent attachment of the ubiquitin-like modifier UFM1 to substrate proteins, and which is involved in various processes, such as ribosome recycling and reticulophagy (also called ER-phagy). As part of the UREL complex, plays a key role in ribosome recycling by promoting mono-ufmylation of RPL26/uL24 subunit of the 60S ribosome. Ufmylation of RPL26/uL24 occurs on free 60S ribosomes following ribosome dissociation: it weakens the junction between post-termination 60S subunits and SEC61 translocons, promoting release and recycling of the large ribosomal subunit from the endoplasmic reticulum membrane. Ufmylation of RPL26/uL24 and subsequent 60S ribosome recycling either take place after normal termination of translation or after ribosome stalling during cotranslational translocation at the endoplasmic reticulum. Within the UREL complex, CDK5RAP3 acts as a substrate adapter that constrains UFL1 ligase activity to mono-ufmylate RPL26/uL24 at 'Lys-134'. The UREL complex is also involved in reticulophagy in response to endoplasmic reticulum stress by promoting ufmylation of proteins such as CYB5R3, thereby promoting lysosomal degradation of ufmylated proteins. Also acts as a regulator of transcription: negatively regulates NF-kappa-B-mediated gene transcription through the control of RELA phosphorylation. Also regulates mitotic G2/M transition checkpoint and mitotic G2 DNA damage checkpoint. Through its interaction with CDKN2A/ARF and MDM2 may induce MDM2-dependent p53/TP53 ubiquitination, stabilization and activation in the nucleus, thereby promoting G1 cell cycle arrest and inhibition of cell proliferation. May also play a role in the rupture of the nuclear envelope during apoptosis. May regulate MAPK14 activity by regulating its dephosphorylation by PPM1D/WIP1. Required for liver development. Functionally, (Microbial infection) May be negatively regulated by hepatitis B virus large envelope protein mutant pre-s2 to promote mitotic entry. The chain is CDK5 regulatory subunit-associated protein 3 from Homo sapiens (Human).